Reading from the N-terminus, the 696-residue chain is uncharacterized protein (696 aa).

The region spanning 293 to 426 (SVLGLVLLGF…GSRQYCFYEE (134 aa)) is the GGDEF domain. An EAL domain is found at 435 to 689 (RIQLEHALHQ…EITAFLAEGN (255 aa)).

This is an uncharacterized protein from Synechocystis sp. (strain ATCC 27184 / PCC 6803 / Kazusa).